The chain runs to 215 residues: MSKVYEWFDERLELQAIADDVSSKYVPPHVNIFYCLGGITFTSFLVQVATGFAMTFYYRPTVAEAFASVQYIMTDVNFGWLIRSIHRWSASMMVMMMILHVFRVYLTGGFKRPRELTWVTGVIMAVCTVSFGVTGYSLPWDQVGYWAVKIVTGVPDAIPVVGAALVELLRGGVGVGQATLTRFYSLHTFVLPLATAVFMLAHFLMIRKQGISGPL.

A helical transmembrane segment spans residues 32–52 (IFYCLGGITFTSFLVQVATGF). Cys35 lines the heme c pocket. Residues His86 and His100 each contribute to the heme b site. 3 consecutive transmembrane segments (helical) span residues 90–110 (ASMM…TGGF), 116–136 (LTWV…VTGY), and 186–206 (LHTF…FLMI). 2 residues coordinate heme b: His187 and His202.

The protein belongs to the cytochrome b family. PetB subfamily. In terms of assembly, the 4 large subunits of the cytochrome b6-f complex are cytochrome b6, subunit IV (17 kDa polypeptide, PetD), cytochrome f and the Rieske protein, while the 4 small subunits are PetG, PetL, PetM and PetN. The complex functions as a dimer. Heme b serves as cofactor. Heme c is required as a cofactor.

It is found in the plastid. Its subcellular location is the chloroplast thylakoid membrane. In terms of biological role, component of the cytochrome b6-f complex, which mediates electron transfer between photosystem II (PSII) and photosystem I (PSI), cyclic electron flow around PSI, and state transitions. The sequence is that of Cytochrome b6 from Oltmannsiellopsis viridis (Marine flagellate).